The following is a 530-amino-acid chain: Glutamate--cysteine ligase (530 aa).

It belongs to the glutamate--cysteine ligase type 1 family. Type 1 subfamily.

It carries out the reaction L-cysteine + L-glutamate + ATP = gamma-L-glutamyl-L-cysteine + ADP + phosphate + H(+). It functions in the pathway sulfur metabolism; glutathione biosynthesis; glutathione from L-cysteine and L-glutamate: step 1/2. In Azotobacter vinelandii (strain DJ / ATCC BAA-1303), this protein is Glutamate--cysteine ligase.